The sequence spans 245 residues: Orotidine 5'-phosphate decarboxylase (245 aa).

Substrate contacts are provided by residues aspartate 22, lysine 44, 71–80 (DLKFHDIPNT), threonine 131, arginine 192, glutamine 201, glycine 221, and arginine 222. The active-site Proton donor is lysine 73.

It belongs to the OMP decarboxylase family. Type 1 subfamily. In terms of assembly, homodimer.

The enzyme catalyses orotidine 5'-phosphate + H(+) = UMP + CO2. The protein operates within pyrimidine metabolism; UMP biosynthesis via de novo pathway; UMP from orotate: step 2/2. Functionally, catalyzes the decarboxylation of orotidine 5'-monophosphate (OMP) to uridine 5'-monophosphate (UMP). This chain is Orotidine 5'-phosphate decarboxylase, found in Yersinia pestis bv. Antiqua (strain Antiqua).